Consider the following 163-residue polypeptide: Protein VASCULATURE COMPLEXITY AND CONNECTIVITY (163 aa).

The signal sequence occupies residues 1–27; it reads MTKIGGILVCLVIVGLDVAAAILGIQA. Helical transmembrane passes span 54 to 74, 95 to 115, and 133 to 153; these read LGLG…LVGG, MACL…IVIG, and FLSI…AYYV.

The protein belongs to the DESIGUAL family. Interacts with OPS. As to expression, expressed in vascular cells, mostly in hypocotyls, and, to a lower extent, in seedlings, roots, flowers, siliques, developing leaves and inflorescences, but barely in mature leaves and seeds. High levels in leaf primordia.

It is found in the endoplasmic reticulum membrane. Functionally, required, together with OPS, for embryo provasculature development and cotyledon vascular complexity and connectivity. Necessary, partially redundantly with DEAL2 and DEAL3, to ensure bilateral symmetry development and early leaf margin patterning, probably via the regulation of auxin and CUC2 distribution. Regulates cell proliferation but not cell expansion. This is Protein VASCULATURE COMPLEXITY AND CONNECTIVITY from Arabidopsis thaliana (Mouse-ear cress).